The sequence spans 500 residues: Maturase K (500 aa).

Belongs to the intron maturase 2 family. MatK subfamily.

Its subcellular location is the plastid. The protein localises to the chloroplast. In terms of biological role, usually encoded in the trnK tRNA gene intron. Probably assists in splicing its own and other chloroplast group II introns. The polypeptide is Maturase K (Argentina anserina (Silverweed cinquefoil)).